A 193-amino-acid chain; its full sequence is MGVIVPGNSSPVPALSAGRSTVEGYDPKLHDPFFDGVSQQLADKGFITAAADDLITWARTGSLMWMTFGLACCAVEMMQASMPRYDLERYGFAPRASPRQSDVMIVAGTLTNKMAPALRKVYDQMPEPRYVISMGSCANGGGYYYYSYSVVRGCDRVVPVDIYVPGCPPTAEALVYGVLQLQKKIRRTGTIER.

The [4Fe-4S] cluster site is built by Cys72, Cys73, Cys137, and Cys167.

This sequence belongs to the complex I 20 kDa subunit family. As to quaternary structure, NDH-1 is composed of 14 different subunits. Subunits NuoB, C, D, E, F, and G constitute the peripheral sector of the complex. The cofactor is [4Fe-4S] cluster.

It is found in the cell inner membrane. The enzyme catalyses a quinone + NADH + 5 H(+)(in) = a quinol + NAD(+) + 4 H(+)(out). NDH-1 shuttles electrons from NADH, via FMN and iron-sulfur (Fe-S) centers, to quinones in the respiratory chain. The immediate electron acceptor for the enzyme in this species is believed to be ubiquinone. Couples the redox reaction to proton translocation (for every two electrons transferred, four hydrogen ions are translocated across the cytoplasmic membrane), and thus conserves the redox energy in a proton gradient. The protein is NADH-quinone oxidoreductase subunit B of Caulobacter vibrioides (strain ATCC 19089 / CIP 103742 / CB 15) (Caulobacter crescentus).